The sequence spans 313 residues: Porphobilinogen deaminase (313 aa).

Cysteine 242 bears the S-(dipyrrolylmethanemethyl)cysteine mark.

The protein belongs to the HMBS family. In terms of assembly, monomer. Dipyrromethane is required as a cofactor.

It carries out the reaction 4 porphobilinogen + H2O = hydroxymethylbilane + 4 NH4(+). The protein operates within porphyrin-containing compound metabolism; protoporphyrin-IX biosynthesis; coproporphyrinogen-III from 5-aminolevulinate: step 2/4. Functionally, tetrapolymerization of the monopyrrole PBG into the hydroxymethylbilane pre-uroporphyrinogen in several discrete steps. The sequence is that of Porphobilinogen deaminase from Escherichia coli O7:K1 (strain IAI39 / ExPEC).